Here is a 301-residue protein sequence, read N- to C-terminus: Heme A synthase (301 aa).

Over Met1–Leu5 the chain is Cytoplasmic. A helical membrane pass occupies residues Ala6–Val26. The Extracellular portion of the chain corresponds to Thr27 to Arg62. Cys35 and Cys42 are oxidised to a cystine. Glu58 is a catalytic residue. His61 lines the heme o pocket. A helical membrane pass occupies residues Val63–Val83. Topologically, residues Lys84 to Lys90 are cytoplasmic. Residues Ile91–Val111 form a helical membrane-spanning segment. Topologically, residues Ile112–Ala121 are extracellular. Residues Leu122–Phe142 traverse the membrane as a helical segment. His123 contributes to the heme o binding site. The Cytoplasmic portion of the chain corresponds to Glu143–His158. The chain crosses the membrane as a helical span at residues Leu159–Leu179. The Extracellular segment spans residues Gly180–Gln203. Cys185 and Cys191 form a disulfide bridge. A helical membrane pass occupies residues Met204–Ala224. Residue His206 participates in heme b binding. Residues Arg225–Arg234 lie on the Cytoplasmic side of the membrane. The chain crosses the membrane as a helical span at residues Gly235 to Leu255. Residues Gly256–Ala259 lie on the Extracellular side of the membrane. A helical transmembrane segment spans residues Thr260–Leu280. His266 is a binding site for heme b. The Cytoplasmic portion of the chain corresponds to Ser281–Gly301.

This sequence belongs to the COX15/CtaA family. Type 1 subfamily. In terms of assembly, interacts with CtaB. Heme b serves as cofactor.

The protein resides in the cell membrane. It catalyses the reaction Fe(II)-heme o + 2 A + H2O = Fe(II)-heme a + 2 AH2. The protein operates within porphyrin-containing compound metabolism; heme A biosynthesis; heme A from heme O: step 1/1. Its function is as follows. Catalyzes the conversion of heme O to heme A by two successive hydroxylations of the methyl group at C8. The first hydroxylation forms heme I, the second hydroxylation results in an unstable dihydroxymethyl group, which spontaneously dehydrates, resulting in the formyl group of heme A. This Exiguobacterium sp. (strain ATCC BAA-1283 / AT1b) protein is Heme A synthase.